The following is a 987-amino-acid chain: Leucine--tRNA ligase (987 aa).

The 'HIGH' region motif lies at 69 to 80 (PYPSGKGLHVGH). Positions 760-764 (KMGKS) match the 'KMSKS' region motif. ATP is bound at residue Lys763.

This sequence belongs to the class-I aminoacyl-tRNA synthetase family.

The protein resides in the cytoplasm. The enzyme catalyses tRNA(Leu) + L-leucine + ATP = L-leucyl-tRNA(Leu) + AMP + diphosphate. This Bifidobacterium longum (strain DJO10A) protein is Leucine--tRNA ligase.